Consider the following 130-residue polypeptide: uncharacterized protein (130 aa).

Residues 1–100 (MSSNSDNTEC…AEPDAAKEEP (100 aa)) are disordered. Basic and acidic residues-rich tracts occupy residues 57–75 (YTTR…KMMD) and 91–100 (AEPDAAKEEP).

This is an uncharacterized protein from Equine herpesvirus 1 (strain Ab4p) (EHV-1).